The following is a 255-amino-acid chain: Acetylglutamate kinase (255 aa).

Substrate is bound by residues glycine 40 to glycine 41, arginine 62, and asparagine 153.

It belongs to the acetylglutamate kinase family. ArgB subfamily.

The protein resides in the cytoplasm. It catalyses the reaction N-acetyl-L-glutamate + ATP = N-acetyl-L-glutamyl 5-phosphate + ADP. It participates in amino-acid biosynthesis; L-arginine biosynthesis; N(2)-acetyl-L-ornithine from L-glutamate: step 2/4. Its function is as follows. Catalyzes the ATP-dependent phosphorylation of N-acetyl-L-glutamate. The protein is Acetylglutamate kinase of Bacillus cereus (strain B4264).